We begin with the raw amino-acid sequence, 201 residues long: Protein S40-5 (201 aa).

Disordered stretches follow at residues 1–39 and 134–178; these read MARG…LTEE and SIHE…EGVG. Residues 17 to 29 show a composition bias toward low complexity; that stretch reads GSSYSYGDSNGNS.

It belongs to the senescence regulator S40 family.

It is found in the cytoplasm. This is Protein S40-5 from Arabidopsis thaliana (Mouse-ear cress).